A 614-amino-acid polypeptide reads, in one-letter code: Vitamin B12 transporter BtuB (614 aa).

The signal sequence occupies residues 1–20 (MIKKASLLTACSVTAFSAWA). The TonB box motif lies at 26-33 (DTLVVTAN). The 115-residue stretch at 38 to 152 (PRSTVLAPTT…IGGVVNIITT (115 aa)) folds into the TBDR plug domain. Residues Leu83, Ser85, Asn92, and 110–111 (GS) each bind cyanocob(III)alamin. The TBDR beta-barrel domain occupies 155 to 614 (EPGTEISAGW…EYTLSGSYTF (460 aa)). A run of 3 beta stranded transmembrane segments spans residues 158-165 (TEISAGWG), 169-178 (YQNYDVSTQQ), and 184-195 (TRVTLLGDYAHT). The Ca(2+) site is built by Asp199, Gln211, Asp213, and Asp215. Transmembrane regions (beta stranded) follow at residues 217 to 227 (FLSKTLYGALE) and 232 to 248 (DAWS…NRTN). Ca(2+) contacts are provided by Tyr249 and Asp250. Ala251 contacts cyanocob(III)alamin. Asp261 lines the Ca(2+) pocket. Transmembrane regions (beta stranded) follow at residues 263–277 (RKLY…LRYN), 279–296 (ELIK…KDYN), 309–325 (TLDE…NNII), 328–337 (HGNVGAGVDW), 353–369 (YDQR…QQVG), 371–381 (FTFEGAARSDD), 385–400 (FGRH…WEFI), 403–417 (YRFI…KAPN), 434–443 (KSKQWEGAFE), 449–458 (VNWRISGYRN), 473–490 (YYNE…TANF), 494–509 (PLTH…ARNA), 517–529 (RRAK…QLDW), and 535–550 (DWGI…YDKD). Residue Thr309 coordinates cyanocob(III)alamin. Arg517 provides a ligand contact to cyanocob(III)alamin. Cyanocob(III)alamin is bound at residue Tyr551. The next 3 membrane-spanning stretches (beta stranded) occupy residues 558 to 572 (TVKM…LAVA), 585 to 596 (IANLFDKDYETV), and 602 to 614 (AGRE…SYTF). The short motif at 597-614 (YGYQTAGREYTLSGSYTF) is the TonB C-terminal box element.

This sequence belongs to the TonB-dependent receptor family. BtuB (TC 1.B.14.3.1) subfamily.

It is found in the cell outer membrane. Functionally, involved in the active translocation of vitamin B12 (cyanocobalamin) across the outer membrane to the periplasmic space. It derives its energy for transport by interacting with the trans-periplasmic membrane protein TonB. This is Vitamin B12 transporter BtuB from Escherichia coli O157:H7.